The following is a 302-amino-acid chain: Recombination-associated protein RdgC (302 aa).

Belongs to the RdgC family.

The protein resides in the cytoplasm. The protein localises to the nucleoid. In terms of biological role, may be involved in recombination. The sequence is that of Recombination-associated protein RdgC from Xylella fastidiosa (strain M23).